The primary structure comprises 224 residues: 7-cyano-7-deazaguanine synthase (224 aa).

10–20 (LSGGLDSATVV) contributes to the ATP binding site. Cysteine 189, cysteine 199, cysteine 202, and cysteine 205 together coordinate Zn(2+).

Belongs to the QueC family. Zn(2+) serves as cofactor.

The catalysed reaction is 7-carboxy-7-deazaguanine + NH4(+) + ATP = 7-cyano-7-deazaguanine + ADP + phosphate + H2O + H(+). It participates in purine metabolism; 7-cyano-7-deazaguanine biosynthesis. Its function is as follows. Catalyzes the ATP-dependent conversion of 7-carboxy-7-deazaguanine (CDG) to 7-cyano-7-deazaguanine (preQ(0)). In Pseudomonas putida (strain W619), this protein is 7-cyano-7-deazaguanine synthase.